We begin with the raw amino-acid sequence, 784 residues long: Ribosome biogenesis protein BOP1 homolog (784 aa).

Residues 1-11 (MTKKLALKRRG) show a composition bias toward basic residues. The tract at residues 1 to 159 (MTKKLALKRR…DSDTSDEEDI (159 aa)) is disordered. 4 stretches are compositionally biased toward acidic residues: residues 27-36 (SENEEEEEDL), 45-54 (EDSTDDEGID), 62-73 (SEELQFESDEEG), and 84-111 (AEEDEESSDEEDNEEEESTDGEEVEDEE). 2 stretches are compositionally biased toward basic and acidic residues: residues 112–123 (KDSKSKQTDDKP) and 138–148 (LPKRDSSKPEY). Residues 149 to 158 (QDSDTSDEED) are compositionally biased toward acidic residues. WD repeat units follow at residues 445 to 486 (GHTD…RTIE), 488 to 526 (DEVVRCVAWCPNPKLSIIAVATGNRLLLVNPKVGDKVLV), 570 to 612 (THFK…SQIP), 615 to 653 (KSKGLIQFVLFHPVKPCFFVATQHNIRIYDLVKQELVKK), 656 to 695 (TNSKWISGMSIHPKGDNLLVSTYDKKMLWFDLDLSTKPYQ), 699 to 738 (LHRNAVRSVAFHLRYPLFASGSDDQAVIVSHGMVYNDLLQ), and 754 to 784 (RDEFGVLDVNWHPVQPWVFSTGADSTIRLYT).

Belongs to the WD repeat BOP1/ERB1 family.

The protein localises to the nucleus. The protein resides in the nucleolus. Its subcellular location is the nucleoplasm. In terms of biological role, required for maturation of ribosomal RNAs and formation of the large ribosomal subunit. This Drosophila melanogaster (Fruit fly) protein is Ribosome biogenesis protein BOP1 homolog.